The primary structure comprises 755 residues: Catalase-peroxidase (755 aa).

The tryptophyl-tyrosyl-methioninium (Trp-Tyr) (with M-271) cross-link spans 91–245 (WHSAGTYRTA…LAAVQMGLIY (155 aa)). Residue His92 is the Proton acceptor of the active site. The interval 193–229 (DNRYGKDPESMQPPGEGTLVAEPAEHGNEESRTNQGE) is disordered. Basic and acidic residues predominate over residues 215–224 (PAEHGNEESR). Positions 245–271 (YVNPEGPEGNPDPVASAKDIRETFGRM) form a cross-link, tryptophyl-tyrosyl-methioninium (Tyr-Met) (with W-91). His286 contributes to the heme binding site.

It belongs to the peroxidase family. Peroxidase/catalase subfamily. As to quaternary structure, homodimer or homotetramer. Heme b serves as cofactor. Formation of the three residue Trp-Tyr-Met cross-link is important for the catalase, but not the peroxidase activity of the enzyme.

It catalyses the reaction H2O2 + AH2 = A + 2 H2O. It carries out the reaction 2 H2O2 = O2 + 2 H2O. Its function is as follows. Bifunctional enzyme with both catalase and broad-spectrum peroxidase activity. The polypeptide is Catalase-peroxidase (Pseudomonas fluorescens (strain Pf0-1)).